The primary structure comprises 434 residues: Alpha-enolase (434 aa).

Residue serine 40 participates in Mg(2+) binding. Substrate contacts are provided by histidine 158 and glutamate 167. Glutamate 210 serves as the catalytic Proton donor. Residues aspartate 245, glutamate 293, and aspartate 318 each coordinate Mg(2+). Substrate-binding positions include glutamate 293, aspartate 318, serine 370–serine 373, and lysine 394.

It belongs to the enolase family. As to quaternary structure, homodimer. Requires Mg(2+) as cofactor.

The protein localises to the cytoplasm. The enzyme catalyses (2R)-2-phosphoglycerate = phosphoenolpyruvate + H2O. Its pathway is carbohydrate degradation; glycolysis; pyruvate from D-glyceraldehyde 3-phosphate: step 4/5. This chain is Alpha-enolase, found in Trachemys scripta elegans (Red-eared slider turtle).